The sequence spans 749 residues: Photosystem I P700 chlorophyll a apoprotein A2 (749 aa).

8 consecutive transmembrane segments (helical) span residues 46–69 (LFSTHFGHLAVIGLWVAGNLFHIA), 135–158 (LYQGAIFIDILVAWLLFGGWLHLQ), 175–199 (MNHHLAVLFGFTNIAWTGHLVHVAI), 273–291 (ISHHHIAIGVFMIIGGHMY), 343–366 (LHFQLGLALACLGTAASLVAHHMG), 382–408 (AALYTHHQYIAIFLMCGAFSHGAIFFV), 430–452 (ALISHLSWVCMLLGFHTLALYLH), and 532–550 (FLVHHGIALGLHTTALILI). Residues Cys-574 and Cys-583 each coordinate [4Fe-4S] cluster. A run of 2 helical transmembrane segments spans residues 590–611 (STYMAIFWALNTIAWATYYWHW) and 658–680 (LSPWAYMFLAGHLVWATGFMFLI). Residues His-669, Met-677, and Tyr-685 each coordinate divinyl chlorophyll a. Trp-686 provides a ligand contact to phylloquinone. Residues 722–742 (LVGVTHFAVGNIFTFGAFVIA) form a helical membrane-spanning segment.

Belongs to the PsaA/PsaB family. As to quaternary structure, the PsaA/B heterodimer binds the P700 chlorophyll special pair and subsequent electron acceptors. PSI consists of a core antenna complex that captures photons, and an electron transfer chain that converts photonic excitation into a charge separation. The cyanobacterial PSI reaction center is composed of one copy each of PsaA,B,C,D,E,F,I,J,K,L,M and X, and forms trimeric complexes. PSI electron transfer chain: 5 divinyl chlorophyll a, 1 divinyl chlorophyll a', 2 phylloquinones and 3 4Fe-4S clusters. PSI core antenna: 90 divinyl chlorophyll a, 22 carotenoids, 3 phospholipids and 1 galactolipid. P700 is a divinyl chlorophyll a/divinyl chlorophyll a' dimer, A0 is one or more divinyl chlorophyll a, A1 is one or both phylloquinones and FX is a shared 4Fe-4S iron-sulfur center. is required as a cofactor.

The protein localises to the cellular thylakoid membrane. The catalysed reaction is reduced [plastocyanin] + hnu + oxidized [2Fe-2S]-[ferredoxin] = oxidized [plastocyanin] + reduced [2Fe-2S]-[ferredoxin]. PsaA and PsaB bind P700, the primary electron donor of photosystem I (PSI), as well as the electron acceptors A0, A1 and FX. PSI is a plastocyanin/cytochrome c6-ferredoxin oxidoreductase, converting photonic excitation into a charge separation, which transfers an electron from the donor P700 chlorophyll pair to the spectroscopically characterized acceptors A0, A1, FX, FA and FB in turn. Oxidized P700 is reduced on the lumenal side of the thylakoid membrane by plastocyanin or cytochrome c6. This chain is Photosystem I P700 chlorophyll a apoprotein A2, found in Prochlorococcus marinus (strain MIT 9313).